The chain runs to 379 residues: Tubulin--tyrosine ligase (379 aa).

One can recognise a TTL domain in the interval 3–370 (TFVVRDENSS…PPDAEQQQQQ (368 aa)).

It belongs to the tubulin--tyrosine ligase family. As to quaternary structure, monomer. Mg(2+) is required as a cofactor. K(+) serves as cofactor.

The catalysed reaction is C-terminal L-alpha-aminoacyl-L-glutamyl-L-glutamyl-[tubulin] + L-tyrosine + ATP = C-terminal L-alpha-aminoacyl-L-glutamyl-L-glutamyl-L-tyrosyl-[tubulin] + ADP + phosphate + H(+). Functionally, catalyzes the post-translational addition of a tyrosine to the C-terminal end of detyrosinated alpha-tubulin. This is Tubulin--tyrosine ligase (TTL) from Sus scrofa (Pig).